The following is a 375-amino-acid chain: Homoserine O-succinyltransferase (375 aa).

The region spanning 48–358 is the AB hydrolase-1 domain; sequence NAVLVCHALS…DAGHDSFLLD (311 aa). The active-site Nucleophile is the S154. A substrate-binding site is contributed by R224. Catalysis depends on residues D319 and H352. D353 provides a ligand contact to substrate.

It belongs to the AB hydrolase superfamily. MetX family. In terms of assembly, homodimer.

It is found in the cytoplasm. It catalyses the reaction L-homoserine + succinyl-CoA = O-succinyl-L-homoserine + CoA. Its pathway is amino-acid biosynthesis; L-methionine biosynthesis via de novo pathway; O-succinyl-L-homoserine from L-homoserine: step 1/1. Its function is as follows. Transfers a succinyl group from succinyl-CoA to L-homoserine, forming succinyl-L-homoserine. In Aromatoleum aromaticum (strain DSM 19018 / LMG 30748 / EbN1) (Azoarcus sp. (strain EbN1)), this protein is Homoserine O-succinyltransferase.